A 69-amino-acid polypeptide reads, in one-letter code: Intrepicalcin (69 aa).

The N-terminal stretch at 1-27 (MRQNTMTIIFIVFIVTFASLTIYGAEA) is a signal peptide. The propeptide occupies 28–36 (SEANFLERR). Disulfide bonds link cysteine 39/cysteine 53, cysteine 46/cysteine 57, and cysteine 52/cysteine 68. The interval 59–60 (RR) is essential for stimulation of [3H]ryanodine binding to RYR1.

It belongs to the scorpion calcin family. In terms of tissue distribution, expressed by the venom gland.

It localises to the secreted. In terms of biological role, this toxin stabilizes ryanodine receptor 1 (RyR1) opening in a long-lasting subconductance state (55% of the full conductance state). Furthermore, it triggers calcium release from sarcoplasmic vesicles (45.3 nM are enough to induce a sharp release, and 50% of the total calcium is released after toxin (100 nM) addition) probably by acting as a cell-penetrating peptide (CPP). In addition, it has been shown to dose-dependently stimulate ryanodine binding to RyR1 (EC(50)=17.4 nM). It also augments the bell-shaped calcium-[3H]ryanodine binding curve that is maximal at about 10 uM calcium concentration. It binds a different site as ryanodine. It acts synergistically with caffeine. In vivo, intracerebroventricular injection into mice induces neurotoxic symptoms, followed by death. The chain is Intrepicalcin from Thorellius intrepidus (Scorpion).